We begin with the raw amino-acid sequence, 123 residues long: Small ribosomal subunit protein uS12 (123 aa).

Asp-89 carries the 3-methylthioaspartic acid modification.

This sequence belongs to the universal ribosomal protein uS12 family. In terms of assembly, part of the 30S ribosomal subunit. Contacts proteins S8 and S17. May interact with IF1 in the 30S initiation complex.

With S4 and S5 plays an important role in translational accuracy. In terms of biological role, interacts with and stabilizes bases of the 16S rRNA that are involved in tRNA selection in the A site and with the mRNA backbone. Located at the interface of the 30S and 50S subunits, it traverses the body of the 30S subunit contacting proteins on the other side and probably holding the rRNA structure together. The combined cluster of proteins S8, S12 and S17 appears to hold together the shoulder and platform of the 30S subunit. The chain is Small ribosomal subunit protein uS12 from Methylobacterium sp. (strain 4-46).